The primary structure comprises 213 residues: MSILSIVLTGFGLAMDAFAVSVAKGITLTRVKAKDALKVALFFGGFQALMPLIGWGAGRYFADYIKAFDHWIAFILLGFIGGKMIFEALKEEDEEKAEVAVSMEVNKNKEREFANMKRKEELSAKNLTVLAIATSIDALAVGVSFAFLGISIVQTIIIIGIITFVLCFLGVIIGEKLGDIFKNYAEIVGGVILILIGINILLEHTGIIEKLFS.

The next 6 membrane-spanning stretches (helical) occupy residues 3–23, 36–56, 67–87, 130–150, 152–172, and 187–207; these read ILSI…VSVA, ALKV…IGWG, AFDH…MIFE, LAIA…FLGI, IVQT…LGVI, and IVGG…HTGI.

Belongs to the MntP (TC 9.B.29) family.

It localises to the cell membrane. Probably functions as a manganese efflux pump. The polypeptide is Putative manganese efflux pump MntP (Clostridium perfringens (strain SM101 / Type A)).